The chain runs to 113 residues: C-C motif chemokine 15 (113 aa).

The first 21 residues, 1–21, serve as a signal peptide directing secretion; sequence MKVSVAALSCLMLVAVLGSQA. 3 cysteine pairs are disulfide-bonded: Cys-53-Cys-77, Cys-54-Cys-93, and Cys-64-Cys-104.

Belongs to the intercrine beta (chemokine CC) family. As to quaternary structure, monomer. The N-terminal is proteolytically cleaved by proteases associated with inflammatory responses. The processed forms CCL15(22-92), CCL15(25-92) and CCL15(29-92) exhibit increase in CCR1-mediated signaling and chemotaxis assays in vitro. Most abundant in heart, skeletal muscle and adrenal gland. Lower levels in placenta, liver, pancreas and bone marrow. CCL15(22-92), CCL15(25-92) and CCL15(29-92) are found in high levels in synovial fluids from rheumatoid patients.

The protein resides in the secreted. In terms of biological role, chemotactic factor that attracts T-cells and monocytes, but not neutrophils, eosinophils, or B-cells. Acts mainly via CC chemokine receptor CCR1. Also binds to CCR3. CCL15(22-92), CCL15(25-92) and CCL15(29-92) are more potent chemoattractants than the CCL15. This Homo sapiens (Human) protein is C-C motif chemokine 15 (CCL15).